A 347-amino-acid polypeptide reads, in one-letter code: Protein RecA (347 aa).

An ATP-binding site is contributed by 70–77 (GPESSGKT).

Belongs to the RecA family.

The protein resides in the cytoplasm. Functionally, can catalyze the hydrolysis of ATP in the presence of single-stranded DNA, the ATP-dependent uptake of single-stranded DNA by duplex DNA, and the ATP-dependent hybridization of homologous single-stranded DNAs. It interacts with LexA causing its activation and leading to its autocatalytic cleavage. The polypeptide is Protein RecA (Ruegeria pomeroyi (strain ATCC 700808 / DSM 15171 / DSS-3) (Silicibacter pomeroyi)).